We begin with the raw amino-acid sequence, 1154 residues long: Caspase recruitment domain-containing protein 11 (1154 aa).

One can recognise a CARD domain in the interval 18 to 110 (EEDALWENVE…ELYKLVTGKE (93 aa)). Positions 111 to 128 (PTRRFSTIVVEEGHEGLT) are linker. A coiled-coil region spans residues 130–449 (FLMNEVIKLQ…KDSNNLDQSL (320 aa)). Phosphoserine is present on residues Ser-448 and Ser-466. The segment at 450-666 (PRNLPVTIIS…GHVRGPGPSV (217 aa)) is inhibitory domain (ID). Residues 460–626 (QDFGDASPRT…HSSSSSHQSE (167 aa)) form a disordered region. Positions 473-484 (EADDSSTSEESP) are enriched in acidic residues. Ser-512 is modified (phosphoserine). Residues 518–529 (RTSDFQAKGHEE) show a composition bias toward basic and acidic residues. Residues 534–562 (ASPSSCGSLPITNSFTKMQPPRSRSSIMS) are compositionally biased toward polar residues. Ser-535 is modified (phosphoserine). Phosphoserine; by PKC/PRKCB and PKC/PRKCQ is present on Ser-559. The span at 573–587 (IVRRYKEDAPHRSTV) shows a compositional bias: basic and acidic residues. Ser-593 carries the phosphoserine modification. Residues 614 to 625 (SSIHSSSSSHQS) are compositionally biased toward low complexity. Ser-644 and Ser-652 each carry phosphoserine; by PKC/PRKCB and PKC/PRKCQ. The PDZ domain occupies 667-755 (QHTTLNGDSL…PVTLHYKVNH (89 aa)). Residues Ser-886 and Ser-925 each carry the phosphoserine modification. Residues 973–1140 (RRRPVLFTPT…LLRVVKDKIG (168 aa)) form the Guanylate kinase-like domain.

In terms of assembly, homodimer; disulfide-linked. Homomultimer; polymerizes following activation, forming a nucleating helical template that seeds BCL10-filament formation via a CARD-CARD interaction. Interacts (via CARD domain) with BCL10 (via CARD domain); interaction takes place following CARD11 activation and polymerization, leading to the formation of a filamentous CBM complex assembly. Component of a CBM complex (CARD11-BCL10-MALT1) complex involved in NF-kappa-B activation. Found in a membrane raft complex, at least composed of BCL10, CARD11, DPP4 and IKBKB. Interacts (via PDZ domain) with DPP4 (via cytoplasmic tail). Post-translationally, phosphorylation at Ser-559, Ser-644 and Ser-652 by PRKCB and PRKCQ leads to a shift from an inactive to an active form that activates the NF-kappa-B signaling. As to expression, detected in adult peripheral blood leukocytes, thymus, spleen and liver. Also found in promyelocytic leukemia HL-60 cells, chronic myelogenous leukemia K-562 cells, Burkitt's lymphoma Raji cells and colorectal adenocarcinoma SW480 cells. Not detected in HeLaS3, MOLT-4, A-549 and G431 cells.

The protein localises to the cytoplasm. It is found in the membrane raft. Maintained in an autoinhibited state via homodimerization in which the CARD domain forms an extensive interaction with the adjacent linker and coiled-coil regions. Activation downstream of T-cell receptor (TCR) by phosphorylation by PRKCB and PRKCQ triggers CARD11 homooligomerization and BCL10 recruitment, followed by activation of NF-kappa-B. Adapter protein that plays a key role in adaptive immune response by transducing the activation of NF-kappa-B downstream of T-cell receptor (TCR) and B-cell receptor (BCR) engagement. Transduces signals downstream TCR or BCR activation via the formation of a multiprotein complex together with BCL10 and MALT1 that induces NF-kappa-B and MAP kinase p38 (MAPK11, MAPK12, MAPK13 and/or MAPK14) pathways. Upon activation in response to TCR or BCR triggering, CARD11 homooligomerizes to form a nucleating helical template that recruits BCL10 via CARD-CARD interaction, thereby promoting polymerization of BCL10 and subsequent recruitment of MALT1: this leads to I-kappa-B kinase (IKK) phosphorylation and degradation, and release of NF-kappa-B proteins for nuclear translocation. Its binding to DPP4 induces T-cell proliferation and NF-kappa-B activation in a T-cell receptor/CD3-dependent manner. Promotes linear ubiquitination of BCL10 by promoting the targeting of BCL10 to RNF31/HOIP. Stimulates the phosphorylation of BCL10. Also activates the TORC1 signaling pathway. The polypeptide is Caspase recruitment domain-containing protein 11 (Homo sapiens (Human)).